The primary structure comprises 161 residues: Cyclic pyranopterin monophosphate synthase (161 aa).

Substrate-binding positions include 75-77 and 113-114; these read LCH and ME. The active site involves D128.

It belongs to the MoaC family. As to quaternary structure, homohexamer; trimer of dimers.

It catalyses the reaction (8S)-3',8-cyclo-7,8-dihydroguanosine 5'-triphosphate = cyclic pyranopterin phosphate + diphosphate. It functions in the pathway cofactor biosynthesis; molybdopterin biosynthesis. In terms of biological role, catalyzes the conversion of (8S)-3',8-cyclo-7,8-dihydroguanosine 5'-triphosphate to cyclic pyranopterin monophosphate (cPMP). In Cronobacter sakazakii (strain ATCC BAA-894) (Enterobacter sakazakii), this protein is Cyclic pyranopterin monophosphate synthase.